The primary structure comprises 432 residues: MGNNVVVLGTQWGDEGKGKIVDLLTERAKYVVRYQGGHNAGHTLVINGEKTVLHLIPSGILRENVTSIIGNGVVLSPAALMKEMKGLEDRGIPVRERLLLSEACPLILDYHVALDNAREKARGAKAIGTTGRGIGPAYEDKVARRGLRVGDLFDKATFAVKLKEVMEYHNFQLVNFYKVEAVDYQKVLDDVMAIADILTSMVVDVSDLLDQARKRGDFVMFEGAQGTLLDIDHGTYPYVTSSNTTAGGVATGSGLGPRYVDYVLGIIKAYSTRVGAGPFPTELFDDTGEFLCKQGNEYGATTGRRRRTGWLDSVAVRRAVQINSLSGFCLTKLDVLDGLEEVKICVAYRMPDGREVTTTPLAADDWEGIEPIYETMPGWSESTFGVKDRSGLPQAALNYIKRIEELTGVPIDIISTGPDRTETMILRDPFDA.

Residues 13 to 19 and 41 to 43 contribute to the GTP site; these read GDEGKGK and GHT. The active-site Proton acceptor is aspartate 14. Mg(2+) is bound by residues aspartate 14 and glycine 41. IMP-binding positions include 14–17, 39–42, threonine 130, arginine 144, glutamine 225, threonine 240, and arginine 304; these read DEGK and NAGH. Histidine 42 serves as the catalytic Proton donor. Substrate is bound at residue 300 to 306; that stretch reads ATTGRRR. GTP is bound by residues arginine 306, 332–334, and 415–417; these read KLD and STG.

Belongs to the adenylosuccinate synthetase family. Homodimer. Mg(2+) is required as a cofactor.

The protein localises to the cytoplasm. The enzyme catalyses IMP + L-aspartate + GTP = N(6)-(1,2-dicarboxyethyl)-AMP + GDP + phosphate + 2 H(+). It participates in purine metabolism; AMP biosynthesis via de novo pathway; AMP from IMP: step 1/2. Functionally, plays an important role in the de novo pathway of purine nucleotide biosynthesis. Catalyzes the first committed step in the biosynthesis of AMP from IMP. In Citrobacter koseri (strain ATCC BAA-895 / CDC 4225-83 / SGSC4696), this protein is Adenylosuccinate synthetase.